The primary structure comprises 1604 residues: Putative surface cell antigen sca2 (1604 aa).

Positions 1-33 (MSLQNSHSKKYVLTFFMSTCLLTSSFLSTSARA) are cleaved as a signal peptide. Disordered stretches follow at residues 324–354 (TTKP…RTKP), 554–603 (NVNN…SNPN), and 1183–1240 (QQEN…KSLL). The span at 554-564 (NVNNNSNKGQN) shows a compositional bias: low complexity. The segment covering 568 to 587 (ILPPTPPLNGSMPPSPPPPL) has biased composition (pro residues). Composition is skewed to basic and acidic residues over residues 1193-1213 (SSTK…KSDS) and 1227-1240 (SKND…KSLL). An Autotransporter domain is found at 1325–1604 (EASINRGVWI…QGLIKLKVNL (280 aa)).

Its subcellular location is the cell outer membrane. The polypeptide is Putative surface cell antigen sca2 (sca2) (Rickettsia felis (strain ATCC VR-1525 / URRWXCal2) (Rickettsia azadi)).